Reading from the N-terminus, the 314-residue chain is Putative peptide transport system permease protein BruAb2_1031 (314 aa).

6 helical membrane passes run 12–32, 101–121, 135–155, 177–197, 237–257, and 286–306; these read AIPV…LLPG, LALL…VVAA, LALL…VILF, WLRS…GYLA, VSVL…SVVI, and MLFL…LYTI. The ABC transmembrane type-1 domain occupies 95-304; the sequence is LPVTISLALL…AINVLVDILY (210 aa).

This sequence belongs to the binding-protein-dependent transport system permease family. In terms of assembly, the complex is composed of two ATP-binding proteins (BruAb2_1033 and BruAb2_1034), two transmembrane proteins (BruAb2_1031 and BruAb2_1032) and a solute-binding protein (BruAb2_1030).

Its subcellular location is the cell inner membrane. Probably part of an ABC transporter complex that could be involved in peptide import. Probably responsible for the translocation of the substrate across the membrane. This chain is Putative peptide transport system permease protein BruAb2_1031, found in Brucella abortus biovar 1 (strain 9-941).